The primary structure comprises 474 residues: MAQLEGYYFSAALSCTFLVSCLLFSAFSRALREPYMDEIFHLPQAQRYCEGRFSLSQWDPMITTLPGLYLVSVGVVKPASWILGWSEHVVCSIGMLRFVNLLFSVGNFYLLYLLFRKIQPRNKASSSIQRILSTLTLAVFPTLYFFNFLYYTEAGSVFFTLFAYLMCLYGNHRTSALLGFCGFMFRQTNIIWAAFCAGHIIAQKCSEAWKTELQKKKEERLPPAKGPLSELRRVLQFLLMYSMSLKNLSMLFLLTWPYMLLLLAFFVFVVVNGGIVVGDRSSHEACLHFPQLFYFFSFTAFFSFPHLLSPTKVKTFLSLVWKRRVQFSVITLVSVFLVWKFTYVHKYLLADNRHYTFYVWKRVFQRHEIVKYLLVPAYMFAGWAVADSLKSKSIFWNLMFFVCLVASTVPQKLLEFRYFILPYIIYRLNMPLPPISRLVCELGCYAVVNFLTFYIFLNKTFQWSDSHDIQRFMW.

The Cytoplasmic portion of the chain corresponds to 1–6 (MAQLEG). A helical membrane pass occupies residues 7-27 (YYFSAALSCTFLVSCLLFSAF). The Extracellular portion of the chain corresponds to 28 to 64 (SRALREPYMDEIFHLPQAQRYCEGRFSLSQWDPMITT). A helical membrane pass occupies residues 65-85 (LPGLYLVSVGVVKPASWILGW). Residues 86-97 (SEHVVCSIGMLR) are Cytoplasmic-facing. The chain crosses the membrane as a helical span at residues 98–118 (FVNLLFSVGNFYLLYLLFRKI). The Extracellular portion of the chain corresponds to 119–126 (QPRNKASS). Residues 127–147 (SIQRILSTLTLAVFPTLYFFN) form a helical membrane-spanning segment. Residues 148-150 (FLY) lie on the Cytoplasmic side of the membrane. The helical transmembrane segment at 151–171 (YTEAGSVFFTLFAYLMCLYGN) threads the bilayer. The Extracellular segment spans residues 172-175 (HRTS). A helical transmembrane segment spans residues 176–196 (ALLGFCGFMFRQTNIIWAAFC). The Cytoplasmic segment spans residues 197-256 (AGHIIAQKCSEAWKTELQKKKEERLPPAKGPLSELRRVLQFLLMYSMSLKNLSMLFLLTW). The chain crosses the membrane as a helical span at residues 257–277 (PYMLLLLAFFVFVVVNGGIVV). Residues 278-283 (GDRSSH) are Extracellular-facing. A helical membrane pass occupies residues 284–304 (EACLHFPQLFYFFSFTAFFSF). Topologically, residues 305–317 (PHLLSPTKVKTFL) are cytoplasmic. The chain crosses the membrane as a helical span at residues 318 to 338 (SLVWKRRVQFSVITLVSVFLV). At 339–365 (WKFTYVHKYLLADNRHYTFYVWKRVFQ) the chain is on the extracellular side. Residues 366 to 386 (RHEIVKYLLVPAYMFAGWAVA) form a helical membrane-spanning segment. At 387-392 (DSLKSK) the chain is on the cytoplasmic side. The chain crosses the membrane as a helical span at residues 393–413 (SIFWNLMFFVCLVASTVPQKL). The Extracellular portion of the chain corresponds to 414–436 (LEFRYFILPYIIYRLNMPLPPIS). The helical transmembrane segment at 437 to 457 (RLVCELGCYAVVNFLTFYIFL) threads the bilayer. Topologically, residues 458-473 (NKTFQWSDSHDIQRFM) are cytoplasmic.

This sequence belongs to the ALG10 glucosyltransferase family. As to quaternary structure, interacts with KCNH1; may regulate KCNH1, possibly by regulating its N-glycosylation. Interacts with KCNH2; may reduce KCNH2 sensitivity to classic proarrhythmic drug blockade, possibly by regulating its N-glycosylation. In terms of tissue distribution, highly expressed in brain, skeletal muscle, uterus, small intestine and liver. Moderately expressed in lung and kidney. Weakly expressed in heart and stomach.

It localises to the endoplasmic reticulum membrane. The enzyme catalyses an alpha-D-Glc-(1-&gt;3)-alpha-D-Glc-(1-&gt;3)-alpha-D-Man-(1-&gt;2)-alpha-D-Man-(1-&gt;2)-alpha-D-Man-(1-&gt;3)-[alpha-D-Man-(1-&gt;2)-alpha-D-Man-(1-&gt;3)-[alpha-D-Man-(1-&gt;2)-alpha-D-Man-(1-&gt;6)]-alpha-D-Man-(1-&gt;6)]-beta-D-Man-(1-&gt;4)-beta-D-GlcNAc-(1-&gt;4)-alpha-D-GlcNAc-diphospho-di-trans,poly-cis-dolichol + a di-trans,poly-cis-dolichyl beta-D-glucosyl phosphate = a alpha-D-Glc-(1-&gt;2)-alpha-D-Glc-(1-&gt;3)-alpha-D-Glc-(1-&gt;3)-alpha-D-Man-(1-&gt;2)-alpha-D-Man-(1-&gt;2)-alpha-D-Man-(1-&gt;3)-[alpha-D-Man-(1-&gt;2)-alpha-D-Man-(1-&gt;3)-[alpha-D-Man-(1-&gt;2)-alpha-D-Man-(1-&gt;6)]-alpha-D-Man-(1-&gt;6)]-beta-D-Man-(1-&gt;4)-beta-D-GlcNAc-(1-&gt;4)-alpha-D-GlcNAc-diphospho-di-trans,poly-cis-dolichol + a di-trans,poly-cis-dolichyl phosphate + H(+). It participates in protein modification; protein glycosylation. Functionally, dol-P-Glc:Glc(2)Man(9)GlcNAc(2)-PP-Dol alpha-1,2-glucosyltransferase that operates in the biosynthetic pathway of dolichol-linked oligosaccharides, the glycan precursors employed in protein asparagine (N)-glycosylation. The assembly of dolichol-linked oligosaccharides begins on the cytosolic side of the endoplasmic reticulum membrane and finishes in its lumen. The sequential addition of sugars to dolichol pyrophosphate produces dolichol-linked oligosaccharides containing fourteen sugars, including two GlcNAcs, nine mannoses and three glucoses. Once assembled, the oligosaccharide is transferred from the lipid to nascent proteins by oligosaccharyltransferases. In the lumen of the endoplasmic reticulum, adds the third and last glucose residue from dolichyl phosphate glucose (Dol-P-Glc) onto the lipid-linked oligosaccharide intermediate Glc(2)Man(9)GlcNAc(2)-PP-Dol to produce Glc(3)Man(9)GlcNAc(2)-PP-Dol. This Rattus norvegicus (Rat) protein is Dol-P-Glc:Glc(2)Man(9)GlcNAc(2)-PP-Dol alpha-1,2-glucosyltransferase.